The following is a 1122-amino-acid chain: Desmoglein-2 (1122 aa).

A signal peptide spans 1–28 (MARSPGDRCALLLLVQLLAVVCLDFGNG). Residues 29 to 54 (LHLEVFSPRNEGKPFPKHTHLVRQKR) constitute a propeptide that is removed on maturation. 4 consecutive Cadherin domains span residues 55-164 (AWIT…EPVF), 165-277 (TQEV…IPVV), 278-398 (ENKM…SSVV), and 397-504 (VVSF…CPVL). At 55–618 (AWITAPVALR…YDNYVGLGPA (564 aa)) the chain is on the extracellular side. An N-linked (GlcNAc...) asparagine glycan is attached at N117. N-linked (GlcNAc...) asparagine glycosylation is found at N314, N467, and N519. Residues 619–639 (AIALMILALLLLLLVPLLLLI) traverse the membrane as a helical segment. The Cytoplasmic portion of the chain corresponds to 640 to 1122 (CHCGGGAKGF…KHSTMQHSYS (483 aa)). 4 positions are modified to phosphoserine: S685, S706, S709, and S729. A Phosphothreonine modification is found at T808. Phosphoserine is present on residues S810, S814, and S819. 6 Desmoglein repeat repeats span residues 885 to 916 (AYSS…ESSV), 917 to 945 (SSRQ…SYAK), 946 to 971 (GSAV…ERVY), 972 to 995 (APTS…ERVI), 996 to 1024 (QPNG…ERES), and 1025 to 1055 (ILAP…ERIL). The interval 913-932 (ESSVSSRQSQKVVPPPDPVA) is disordered. Residues 914 to 924 (SSVSSRQSQKV) show a composition bias toward low complexity. Residues 1089–1122 (LPNLDLEESDRPNSTITTSSTRVTKHSTMQHSYS) form a disordered region. Polar residues predominate over residues 1100-1122 (PNSTITTSSTRVTKHSTMQHSYS). S1122 carries the phosphoserine modification.

As to quaternary structure, interacts with PKP2. Interacts with CTNNB1; the interaction promotes localization of CTNNB1 at cell junctions thus reducing its nuclear localization and subsequent transcription of CTNNB1/TCF-target genes. Post-translationally, palmitoylated by ZDHHC5 at the plasma membrane. Expressed in undifferentiated pluripotent stem cells, expression decreases during differentiation (at protein level). Expressed by embryonic stem cells, expression is reduced during differentiation (at protein level). Expressed at the apical-lateral cell membrane of kidney tubular epithelial cells (at protein level). Expressed in epidermis and heart (at protein level). Expressed in the brain, spleen, lung, liver skeletal muscle, kidney and testis.

The protein resides in the cell membrane. Its subcellular location is the cell junction. It is found in the desmosome. It localises to the cytoplasm. Its function is as follows. A component of desmosome cell-cell junctions which are required for positive regulation of cellular adhesion. Involved in the interaction of plaque proteins and intermediate filaments mediating cell-cell adhesion. Required for proliferation and viability of embryonic stem cells in the blastocyst, thereby crucial for progression of post-implantation embryonic development. Maintains pluripotency by regulating epithelial to mesenchymal transition/mesenchymal to epithelial transition (EMT/MET) via interacting with and sequestering CTNNB1 to sites of cell-cell contact, thereby reducing translocation of CTNNB1 to the nucleus and subsequent transcription of CTNNB1/TCF-target genes. Promotes pluripotency and the multi-lineage differentiation potential of hematopoietic stem cells. Plays a role in endothelial cell sprouting and elongation via mediating the junctional-association of cortical actin fibers and CDH5. Plays a role in limiting inflammatory infiltration and the apoptotic response to injury in kidney tubular epithelial cells, potentially via its role in maintaining cell-cell adhesion and the epithelial barrier. This is Desmoglein-2 (Dsg2) from Mus musculus (Mouse).